Here is a 307-residue protein sequence, read N- to C-terminus: Probable 2-methylisocitrate lyase 2 (307 aa).

A substrate-binding site is contributed by 53-55; it reads SGA. D92 and D94 together coordinate Mg(2+). Substrate contacts are provided by residues 129–130, R164, E194, 216–218, R247, and R276; these read CG and NMT.

Belongs to the isocitrate lyase/PEP mutase superfamily. Methylisocitrate lyase family. In terms of assembly, homotetramer; dimer of dimers. Mg(2+) serves as cofactor.

It catalyses the reaction (2S,3R)-3-hydroxybutane-1,2,3-tricarboxylate = pyruvate + succinate. It functions in the pathway organic acid metabolism; propanoate degradation. In terms of biological role, involved in the catabolism of short chain fatty acids (SCFA) via the 2-methylcitrate cycle I (propionate degradation route). Catalyzes the thermodynamically favored C-C bond cleavage of (2R,3S)-2-methylisocitrate to yield pyruvate and succinate via an alpha-carboxy-carbanion intermediate. This chain is Probable 2-methylisocitrate lyase 2, found in Corynebacterium glutamicum (strain ATCC 13032 / DSM 20300 / JCM 1318 / BCRC 11384 / CCUG 27702 / LMG 3730 / NBRC 12168 / NCIMB 10025 / NRRL B-2784 / 534).